We begin with the raw amino-acid sequence, 103 residues long: Sperm-associated antigen 11A (103 aa).

Positions 1 to 24 (MRQRLLPSVTSLLLVALLFPGSSQ) are cleaved as a signal peptide. N-linked (GlcNAc...) asparagine glycosylation occurs at N29.

The protein belongs to the SPAG11 family.

The protein resides in the secreted. Has antimicrobial activity against E.coli. Plays a role in the defense response in the male reproductive tract, contributing to sperm maturation, storage and protection. In Pan troglodytes (Chimpanzee), this protein is Sperm-associated antigen 11A.